The primary structure comprises 142 residues: Transcription antitermination protein NusB (142 aa).

It belongs to the NusB family.

Its function is as follows. Involved in transcription antitermination. Required for transcription of ribosomal RNA (rRNA) genes. Binds specifically to the boxA antiterminator sequence of the ribosomal RNA (rrn) operons. The polypeptide is Transcription antitermination protein NusB (Thermotoga sp. (strain RQ2)).